We begin with the raw amino-acid sequence, 187 residues long: Elongation factor P (187 aa).

The protein belongs to the elongation factor P family.

It is found in the cytoplasm. The protein operates within protein biosynthesis; polypeptide chain elongation. Its function is as follows. Involved in peptide bond synthesis. Stimulates efficient translation and peptide-bond synthesis on native or reconstituted 70S ribosomes in vitro. Probably functions indirectly by altering the affinity of the ribosome for aminoacyl-tRNA, thus increasing their reactivity as acceptors for peptidyl transferase. The sequence is that of Elongation factor P from Synechococcus sp. (strain CC9311).